The following is a 377-amino-acid chain: MTSGSQGAFEAARRIVFKVGSALLVDAETGAANRAWLEAFCADAADLRAAGKQVLVVSSGAVALGRRRLGLTGRKTTLPEKQAAAAAGQSLLMRAWEEAFEPHGIGVAQILLTRDDTEMRRRWLNARATTETLMGLGVVPVVNENDTVVTEEIRYGDNDRLAARVAQMAGADLLVLLSDIDGLYTADPRKNPKAQHIPRVSEITPEIAGMAEGANAAAGVGTGGMATKIAAARIARAAGCATLITLGSRPRPLAAIAAGEKATLIEAGASPAAAYKAWIAGSLAPQGWVTVDAGAASALLAGKSLLPAGVRAVEGPFDKGDAVRVRDENGREVARGLVRYDSADAQRIAGLRSDAIEAELGFTEGPMIHADDLAVAH.

Lys-18 is an ATP binding site. Positions 59, 146, and 158 each coordinate substrate. Residues Ser-178–Asp-179 and Thr-222–Lys-228 contribute to the ATP site. The PUA domain occupies Gln-286 to Thr-363.

This sequence belongs to the glutamate 5-kinase family.

The protein resides in the cytoplasm. It catalyses the reaction L-glutamate + ATP = L-glutamyl 5-phosphate + ADP. The protein operates within amino-acid biosynthesis; L-proline biosynthesis; L-glutamate 5-semialdehyde from L-glutamate: step 1/2. Functionally, catalyzes the transfer of a phosphate group to glutamate to form L-glutamate 5-phosphate. This Caulobacter vibrioides (strain ATCC 19089 / CIP 103742 / CB 15) (Caulobacter crescentus) protein is Glutamate 5-kinase.